A 225-amino-acid polypeptide reads, in one-letter code: Urease accessory protein UreG (225 aa).

Position 25-32 (25-32 (GPVGAGKT)) interacts with GTP.

Belongs to the SIMIBI class G3E GTPase family. UreG subfamily. As to quaternary structure, homodimer. UreD, UreF and UreG form a complex that acts as a GTP-hydrolysis-dependent molecular chaperone, activating the urease apoprotein by helping to assemble the nickel containing metallocenter of UreC. The UreE protein probably delivers the nickel.

Its subcellular location is the cytoplasm. In terms of biological role, facilitates the functional incorporation of the urease nickel metallocenter. This process requires GTP hydrolysis, probably effectuated by UreG. The chain is Urease accessory protein UreG from Haemophilus influenzae (strain ATCC 51907 / DSM 11121 / KW20 / Rd).